A 508-amino-acid polypeptide reads, in one-letter code: Aromatase (508 aa).

Cys437 is a binding site for heme.

It belongs to the cytochrome P450 family. Heme is required as a cofactor.

The protein resides in the membrane. It catalyses the reaction testosterone + 3 reduced [NADPH--hemoprotein reductase] + 3 O2 = 17beta-estradiol + formate + 3 oxidized [NADPH--hemoprotein reductase] + 4 H2O + 4 H(+). The enzyme catalyses androst-4-ene-3,17-dione + 3 reduced [NADPH--hemoprotein reductase] + 3 O2 = estrone + formate + 3 oxidized [NADPH--hemoprotein reductase] + 4 H2O + 4 H(+). Catalyzes the formation of aromatic C18 estrogens from C19 androgens. The protein is Aromatase (Cyp19a1) of Rattus norvegicus (Rat).